We begin with the raw amino-acid sequence, 450 residues long: Keratin, type I cytoskeletal 25 (450 aa).

The tract at residues 1–25 (MSLRLPSGSRRASPRPTTGSLRLSS) is disordered. Residues 1-78 (MSLRLPSGSR…VNEGGLLSGN (78 aa)) form a head region. The coil 1A stretch occupies residues 79-114 (EKVTMQNLNDRLASYLENVRALEEANADLEQKIKGW). Residues 79–394 (EKVTMQNLND…LLIGGDDGAC (316 aa)) enclose the IF rod domain. Residues 115 to 136 (YEKFGPGSCRGLDHDYSRYFPI) are linker 1. The tract at residues 137–228 (IEDLKNQIIA…KNHKEEMQVL (92 aa)) is coil 1B. The interval 229–251 (QCAAGGNVNVEMNAAPGVDLTVL) is linker 12. Residues 252–390 (LNNMRAEYEA…ETYCLLIGGD (139 aa)) are coil 2. A tail region spans residues 391-450 (DGACKSGGYKSKDYGAGNVGNQMKDPVKAIVVKKVLEEVDQRSKILTPRLHSLEEKSQSN). Ser-442 bears the Phosphoserine mark.

This sequence belongs to the intermediate filament family. Heterodimer of a type I and a type II keratin. Heterodimer with type II keratin KRT5 leading to the formation of keratin intermediate filament (KIF) network. Interacts with KRT6A to form filaments.

The protein localises to the cytoplasm. Functionally, essential for the proper assembly of type I and type II keratin protein complexes and formation of keratin intermediate filaments in the inner root sheath (irs). Plays a role in the cytoskeleton organization. In Bos taurus (Bovine), this protein is Keratin, type I cytoskeletal 25.